The sequence spans 804 residues: Leucine--tRNA ligase (804 aa).

The short motif at 39-50 (PYPSGAGLHVGH) is the 'HIGH' region element. The short motif at 580 to 584 (KMSKS) is the 'KMSKS' region element. Lys583 is a binding site for ATP.

The protein belongs to the class-I aminoacyl-tRNA synthetase family.

The protein localises to the cytoplasm. It catalyses the reaction tRNA(Leu) + L-leucine + ATP = L-leucyl-tRNA(Leu) + AMP + diphosphate. The polypeptide is Leucine--tRNA ligase (Mycoplasma capricolum subsp. capricolum (strain California kid / ATCC 27343 / NCTC 10154)).